Here is a 240-residue protein sequence, read N- to C-terminus: Uridylate kinase (240 aa).

ATP is bound at residue 12–15 (KLSG). Residues 20-25 (GEKGFG) form an involved in allosteric activation by GTP region. Gly-54 lines the UMP pocket. Gly-55 and Arg-59 together coordinate ATP. UMP contacts are provided by residues Asp-74 and 135–142 (TGSPYFST). Residues Asn-163, Tyr-169, and Asp-172 each contribute to the ATP site.

This sequence belongs to the UMP kinase family. As to quaternary structure, homohexamer.

Its subcellular location is the cytoplasm. It carries out the reaction UMP + ATP = UDP + ADP. Its pathway is pyrimidine metabolism; CTP biosynthesis via de novo pathway; UDP from UMP (UMPK route): step 1/1. With respect to regulation, allosterically activated by GTP. Inhibited by UTP. Its function is as follows. Catalyzes the reversible phosphorylation of UMP to UDP. In Lactiplantibacillus plantarum (strain ATCC BAA-793 / NCIMB 8826 / WCFS1) (Lactobacillus plantarum), this protein is Uridylate kinase.